A 269-amino-acid polypeptide reads, in one-letter code: Formamidopyrimidine-DNA glycosylase (269 aa).

The active-site Schiff-base intermediate with DNA is Pro-2. Residue Glu-3 is the Proton donor of the active site. Catalysis depends on Lys-57, which acts as the Proton donor; for beta-elimination activity. The DNA site is built by His-90, Arg-109, and Lys-150. The segment at 235–269 (QVYGRGGEPCRVCGTPIQMAKHGQRSTFFCPACQH) adopts an FPG-type zinc-finger fold. Catalysis depends on Arg-259, which acts as the Proton donor; for delta-elimination activity.

Belongs to the FPG family. Monomer. Requires Zn(2+) as cofactor.

The enzyme catalyses Hydrolysis of DNA containing ring-opened 7-methylguanine residues, releasing 2,6-diamino-4-hydroxy-5-(N-methyl)formamidopyrimidine.. It carries out the reaction 2'-deoxyribonucleotide-(2'-deoxyribose 5'-phosphate)-2'-deoxyribonucleotide-DNA = a 3'-end 2'-deoxyribonucleotide-(2,3-dehydro-2,3-deoxyribose 5'-phosphate)-DNA + a 5'-end 5'-phospho-2'-deoxyribonucleoside-DNA + H(+). Functionally, involved in base excision repair of DNA damaged by oxidation or by mutagenic agents. Acts as a DNA glycosylase that recognizes and removes damaged bases. Has a preference for oxidized purines, such as 7,8-dihydro-8-oxoguanine (8-oxoG). Has AP (apurinic/apyrimidinic) lyase activity and introduces nicks in the DNA strand. Cleaves the DNA backbone by beta-delta elimination to generate a single-strand break at the site of the removed base with both 3'- and 5'-phosphates. The polypeptide is Formamidopyrimidine-DNA glycosylase (Sodalis glossinidius (strain morsitans)).